Here is a 543-residue protein sequence, read N- to C-terminus: Tyrosine-protein kinase Yes (543 aa).

A compositionally biased stretch (basic and acidic residues) spans Met1–Asn20. Positions Met1–Ser45 are disordered. Gly2 carries the N-myristoyl glycine lipid modification. The S-palmitoyl cysteine; in membrane form moiety is linked to residue Cys3. A Phosphothreonine modification is found at Thr21. Tyr32 is modified (phosphotyrosine). Ser40 is subject to Phosphoserine. In terms of domain architecture, SH3 spans Gly91 to Ser152. Residues Trp158–Cys255 form the SH2 domain. Positions Leu277 to Phe530 constitute a Protein kinase domain. ATP contacts are provided by residues Leu283 to Val291 and Lys305. 2 positions are modified to phosphotyrosine: Tyr336 and Tyr345. Asp396 (proton acceptor) is an active-site residue. Phosphotyrosine; by autocatalysis is present on Tyr426. Tyr446 is subject to Phosphotyrosine. Residue Tyr537 is modified to Phosphotyrosine; by CSK.

The protein belongs to the protein kinase superfamily. Tyr protein kinase family. SRC subfamily. In terms of assembly, interacts with YAP1 and CSF1R. Interacts with CTNND1; this interaction allows YES1-mediated activation of FYN and FER and subsequent phosphorylation of CTNND1. Interacts with FASLG. Interacts with IL6ST/gp130. Interacts with SCRIB, when YES1 is in a closed conformation; the interaction facilitates YES1 autophosphorylation. In terms of processing, phosphorylated. Phosphorylation by CSK on the C-terminal tail maintains the enzyme in an inactive state. Autophosphorylation at Tyr-426 maintains enzyme activity by blocking CSK-mediated inhibition. Palmitoylation at Cys-3 promotes membrane localization. As to expression, expressed in the epithelial cells of renal proximal tubules and stomach as well as hematopoietic cells in the bone marrow and spleen in the fetal tissues. In adult, expressed in epithelial cells of the renal proximal tubules and present in keratinocytes in the basal epidermal layer of epidermis.

It localises to the cell membrane. The protein localises to the cytoplasm. Its subcellular location is the cytoskeleton. It is found in the microtubule organizing center. The protein resides in the centrosome. It localises to the cytosol. The protein localises to the cell junction. The catalysed reaction is L-tyrosyl-[protein] + ATP = O-phospho-L-tyrosyl-[protein] + ADP + H(+). Functionally, non-receptor protein tyrosine kinase that is involved in the regulation of cell growth and survival, apoptosis, cell-cell adhesion, cytoskeleton remodeling, and differentiation. Stimulation by receptor tyrosine kinases (RTKs) including EGFR, PDGFR, CSF1R and FGFR leads to recruitment of YES1 to the phosphorylated receptor, and activation and phosphorylation of downstream substrates. Upon EGFR activation, promotes the phosphorylation of PARD3 to favor epithelial tight junction assembly. Participates in the phosphorylation of specific junctional components such as CTNND1 by stimulating the FYN and FER tyrosine kinases at cell-cell contacts. Upon T-cell stimulation by CXCL12, phosphorylates collapsin response mediator protein 2/DPYSL2 and induces T-cell migration. Participates in CD95L/FASLG signaling pathway and mediates AKT-mediated cell migration. Plays a role in cell cycle progression by phosphorylating the cyclin-dependent kinase 4/CDK4 thus regulating the G1 phase. Also involved in G2/M progression and cytokinesis. Catalyzes phosphorylation of organic cation transporter OCT2 which induces its transport activity. This Homo sapiens (Human) protein is Tyrosine-protein kinase Yes (YES1).